Reading from the N-terminus, the 65-residue chain is Beta-toxin Am IT (65 aa).

The residue at position 1 (E1) is a Pyrrolidone carboxylic acid (Glu); partial. Positions 1 to 64 constitute an LCN-type CS-alpha/beta domain; the sequence is EHGYLLDKYT…LWNYKTNKCK (64 aa). 4 disulfides stabilise this stretch: C12/C63, C16/C38, C23/C45, and C27/C47. S65 carries the serine amide modification.

Belongs to the long (4 C-C) scorpion toxin superfamily. Sodium channel inhibitor family. In terms of tissue distribution, expressed by the venom gland.

Its subcellular location is the secreted. In terms of biological role, has a toxic effect on insects and mammals. On German cockroach larvae, it provokes contraction, paralysis and lethality. Intracerebroventricular injection into mice causes severe neurotoxic symptoms. It fully competes with the binding of the iodinated Css4 (AC P60266) on rat brain synaptosomes, with moderate affinity and in a concentration-dependent manner (EC(50)=25 nM). It may act on both site 3 and site 4 of voltage-gated sodium channels. This chain is Beta-toxin Am IT, found in Androctonus mauritanicus mauritanicus (Scorpion).